The following is a 117-amino-acid chain: Large ribosomal subunit protein bL20c (117 aa).

The protein belongs to the bacterial ribosomal protein bL20 family.

It is found in the plastid. The protein resides in the chloroplast. Its function is as follows. Binds directly to 23S ribosomal RNA and is necessary for the in vitro assembly process of the 50S ribosomal subunit. It is not involved in the protein synthesizing functions of that subunit. The chain is Large ribosomal subunit protein bL20c from Drimys granadensis.